The chain runs to 682 residues: Potassium-transporting ATPase ATP-binding subunit (682 aa).

4 helical membrane-spanning segments follow: residues 34–54 (PVMF…LAMV), 58–78 (IAGS…TVLF), 219–239 (IALT…TATL), and 254–274 (VLVA…LSAI). Residue Asp307 is the 4-aspartylphosphate intermediate of the active site. Residues Asp344, Glu348, 377 to 384 (FTAQSRMS), and Lys395 each bind ATP. Mg(2+)-binding residues include Asp518 and Asp522. 3 helical membrane-spanning segments follow: residues 588 to 608 (FAII…LNVM), 616 to 636 (AILS…PLAL), and 662 to 682 (LLVP…LGLA).

The protein belongs to the cation transport ATPase (P-type) (TC 3.A.3) family. Type IA subfamily. As to quaternary structure, the system is composed of three essential subunits: KdpA, KdpB and KdpC.

It is found in the cell inner membrane. The enzyme catalyses K(+)(out) + ATP + H2O = K(+)(in) + ADP + phosphate + H(+). Part of the high-affinity ATP-driven potassium transport (or Kdp) system, which catalyzes the hydrolysis of ATP coupled with the electrogenic transport of potassium into the cytoplasm. This subunit is responsible for energy coupling to the transport system and for the release of the potassium ions to the cytoplasm. This chain is Potassium-transporting ATPase ATP-binding subunit, found in Salmonella dublin (strain CT_02021853).